We begin with the raw amino-acid sequence, 565 residues long: Proline--tRNA ligase (565 aa).

Belongs to the class-II aminoacyl-tRNA synthetase family. ProS type 1 subfamily. In terms of assembly, homodimer.

Its subcellular location is the cytoplasm. It catalyses the reaction tRNA(Pro) + L-proline + ATP = L-prolyl-tRNA(Pro) + AMP + diphosphate. Catalyzes the attachment of proline to tRNA(Pro) in a two-step reaction: proline is first activated by ATP to form Pro-AMP and then transferred to the acceptor end of tRNA(Pro). As ProRS can inadvertently accommodate and process non-cognate amino acids such as alanine and cysteine, to avoid such errors it has two additional distinct editing activities against alanine. One activity is designated as 'pretransfer' editing and involves the tRNA(Pro)-independent hydrolysis of activated Ala-AMP. The other activity is designated 'posttransfer' editing and involves deacylation of mischarged Ala-tRNA(Pro). The misacylated Cys-tRNA(Pro) is not edited by ProRS. This chain is Proline--tRNA ligase, found in Francisella tularensis subsp. holarctica (strain FTNF002-00 / FTA).